Here is a 293-residue protein sequence, read N- to C-terminus: GTPase Era (293 aa).

Positions 3 to 170 constitute an Era-type G domain; sequence KSGFITIIGR…VELMVKYMPE (168 aa). The segment at 11 to 18 is G1; sequence GRPNVGKS. A GTP-binding site is contributed by 11-18; the sequence is GRPNVGKS. The tract at residues 37-41 is G2; that stretch reads QTTRN. Residues 58–61 form a G3 region; it reads DTPG. GTP contacts are provided by residues 58–62 and 120–123; these read DTPGI and NKID. A G4 region spans residues 120–123; the sequence is NKID. The tract at residues 149 to 151 is G5; it reads ISA. A KH type-2 domain is found at 201–278; it reads LSKEVPHGIA…YLEVWVKVKK (78 aa).

It belongs to the TRAFAC class TrmE-Era-EngA-EngB-Septin-like GTPase superfamily. Era GTPase family. Monomer.

Its subcellular location is the cytoplasm. It localises to the cell membrane. Its function is as follows. An essential GTPase that binds both GDP and GTP, with rapid nucleotide exchange. Plays a role in 16S rRNA processing and 30S ribosomal subunit biogenesis and possibly also in cell cycle regulation and energy metabolism. The polypeptide is GTPase Era (Clostridium kluyveri (strain NBRC 12016)).